The following is a 459-amino-acid chain: Probable 1,4-beta-D-glucan cellobiohydrolase C (459 aa).

The signal sequence occupies residues 1–18 (MHYPLSLALAFLPFGIQA). The region spanning 19 to 54 (QQTLWGQCGGQGYSGATSCVAGATCATVNEYYAQCT) is the CBM1 domain. 2 cysteine pairs are disulfide-bonded: Cys26/Cys43 and Cys37/Cys53. A thr-rich linker region spans residues 54–94 (TPAAGTSSATTLKTTTSSTTAAVTTTTTTQSPTGSASPTTT). The segment at 76–97 (VTTTTTTQSPTGSASPTTTASA) is disordered. Residues 95–459 (ASASGNPFSG…QLLTNANPAF (365 aa)) form a catalytic region. Asp189 is a catalytic residue. Cys190 and Cys249 are disulfide-bonded. Asp235 acts as the Proton donor in catalysis. Asn303 is a glycosylation site (N-linked (GlcNAc...) asparagine). The cysteines at positions 381 and 428 are disulfide-linked. The active-site Nucleophile is the Asp414.

This sequence belongs to the glycosyl hydrolase 6 (cellulase B) family.

Its subcellular location is the secreted. The enzyme catalyses Hydrolysis of (1-&gt;4)-beta-D-glucosidic linkages in cellulose and cellotetraose, releasing cellobiose from the non-reducing ends of the chains.. The biological conversion of cellulose to glucose generally requires three types of hydrolytic enzymes: (1) Endoglucanases which cut internal beta-1,4-glucosidic bonds; (2) Exocellobiohydrolases that cut the disaccharide cellobiose from the non-reducing end of the cellulose polymer chain; (3) Beta-1,4-glucosidases which hydrolyze the cellobiose and other short cello-oligosaccharides to glucose. The sequence is that of Probable 1,4-beta-D-glucan cellobiohydrolase C (cbhC) from Aspergillus niger (strain ATCC MYA-4892 / CBS 513.88 / FGSC A1513).